Reading from the N-terminus, the 708-residue chain is C-Jun-amino-terminal kinase-interacting protein 1 (708 aa).

The segment at 1–26 (MAERESGLSGGAASPPAASPFLGLHI) is disordered. A compositionally biased stretch (low complexity) spans 11–24 (GAASPPAASPFLGL). Serine 14, serine 28, and serine 39 each carry phosphoserine. The interval 69-368 (PPRAGLLSAG…PPRASLSSDT (300 aa)) is disordered. The segment covering 71-87 (RAGLLSAGSSGSAGSRL) has biased composition (low complexity). Residue threonine 103 is modified to Phosphothreonine; by MAPK8, MAPK9 and MAPK10. Positions 105-116 (GAEDDEEDDDEL) are enriched in acidic residues. Residues 126–282 (SKAESGQEPA…EATEEIYLTP (157 aa)) form a JNK-binding domain (JBD) region. A Phosphoserine modification is found at serine 149. Residues 154–173 (RPKRPTTLNLFPQVPRSQDT) form a minimal inhibitory domain (MID) region. Positions 159 to 179 (TTLNLFPQVPRSQDTLNNNSL) are enriched in polar residues. Residues serine 178, serine 184, serine 190, serine 192, and serine 193 each carry the phosphoserine modification. The segment covering 191–201 (RSSSPLKTGEQ) has biased composition (polar residues). Threonine 202 carries the post-translational modification Phosphothreonine; by MAPK8, MAPK9 and MAPK10. Phosphoserine is present on serine 211. Residues 220–232 (PVPTQDRGTSTDS) show a composition bias toward polar residues. Positions 264 to 274 (IHYQADVRLEA) are enriched in basic and acidic residues. Residues 280 to 468 (LTPVQRPPDP…NVFMSGRSRS (189 aa)) form an interaction with MAP3K7 region. Over residues 292-308 (PTSTFLPPTESRMSVSS) the composition is skewed to polar residues. 9 positions are modified to phosphoserine: serine 308, serine 325, serine 327, serine 337, serine 352, serine 363, serine 366, serine 404, and serine 406. 2 consecutive short sequence motifs (D-box) follow at residues 350 to 357 (RGSLGEPP) and 361 to 369 (RASLSSDTS). Phosphothreonine is present on threonine 408. The disordered stretch occupies residues 426-448 (EEYEEAPQPRPPTCLSEDSTPDE). 2 positions are modified to phosphoserine: serine 441 and serine 444. At threonine 445 the chain carries Phosphothreonine. Serine 466, serine 468, serine 469, and serine 470 each carry phosphoserine. Positions 468 to 657 (SSSAESFGLF…PKNNKYFGFI (190 aa)) are interaction with VRK2. The 62-residue stretch at 485-546 (EHEQTHRAIF…PAYYAIEVTK (62 aa)) folds into the SH3 domain. The region spanning 558 to 697 (SDWIDQFRVK…FQQFYKQFVE (140 aa)) is the PID domain.

Belongs to the JIP scaffold family. In terms of assembly, forms homo- or heterooligomeric complexes. Binds specific components of the JNK signaling pathway namely MAPK8/JNK1, MAPK9/JNK2, MAPK10/JNK3, MAP2K7/MKK7, MAP3K11/MLK3 and DLK1. Also binds the proline-rich domain-containing splice variant of apolipoprotein E receptor 2 (ApoER2). Interacts, via the PID domain, with ARHGEF28. Binds the cytoplasmic tails of LRP1 and LRP2 (Megalin). Binds the TPR motif-containing C-terminal of kinesin light chain, KLC1. Pre-assembled MAPK8IP1 scaffolding complexes are then transported as a cargo of kinesin, to the required subcellular location. Interacts with the cytoplasmic domain of APP. Interacts with DCLK2, VRK2 and MAP3K7/TAK1. Found in a complex with SH3RF1, RAC1, MAP3K11/MLK3, MAP2K7/MKK7 and MAPK8/JNK1. Found in a complex with SH3RF1, RAC2, MAP3K7/TAK1, MAP2K7/MKK7, MAPK8/JNK1 and MAPK9/JNK2. Interacts with SH3RF2. In terms of processing, phosphorylated by MAPK8, MAPK9 and MAPK10. Phosphorylation on Thr-103 is also necessary for the dissociation and activation of MAP3K12. Phosphorylated by VRK2. Hyperphosphorylated during mitosis following activation of stress-activated and MAP kinases. Ubiquitinated. Two preliminary events are required to prime for ubiquitination; phosphorylation and an increased in intracellular calcium concentration. Then, the calcium influx initiates ubiquitination and degradation by the ubiquitin-proteasome pathway. Highly expressed in brain and pancreatic beta-cells. Weaker expression found in kidney.

It localises to the cytoplasm. The protein resides in the perinuclear region. The protein localises to the nucleus. Its subcellular location is the endoplasmic reticulum membrane. It is found in the mitochondrion membrane. Functionally, the JNK-interacting protein (JIP) group of scaffold proteins selectively mediates JNK signaling by aggregating specific components of the MAPK cascade to form a functional JNK signaling module. Required for JNK activation in response to excitotoxic stress. Cytoplasmic MAPK8IP1 causes inhibition of JNK-regulated activity by retaining JNK in the cytoplasm and thus inhibiting the JNK phosphorylation of c-Jun. May also participate in ApoER2-specific reelin signaling. Directly, or indirectly, regulates GLUT2 gene expression and beta-cell function. Appears to have a role in cell signaling in mature and developing nerve terminals. May function as a regulator of vesicle transport, through interactions with the JNK-signaling components and motor proteins. Functions as an anti-apoptotic protein and whose level seems to influence the beta-cell death or survival response. Acts as a scaffold protein that coordinates with SH3RF1 in organizing different components of the JNK pathway, including RAC1 or RAC2, MAP3K11/MLK3 or MAP3K7/TAK1, MAP2K7/MKK7, MAPK8/JNK1 and/or MAPK9/JNK2 into a functional multiprotein complex to ensure the effective activation of the JNK signaling pathway. Regulates the activation of MAPK8/JNK1 and differentiation of CD8(+) T-cells. This is C-Jun-amino-terminal kinase-interacting protein 1 (Mapk8ip1) from Rattus norvegicus (Rat).